A 354-amino-acid polypeptide reads, in one-letter code: Protein RecA (354 aa).

65-72 serves as a coordination point for ATP; it reads GPESSGKT.

It belongs to the RecA family.

The protein resides in the cytoplasm. Functionally, can catalyze the hydrolysis of ATP in the presence of single-stranded DNA, the ATP-dependent uptake of single-stranded DNA by duplex DNA, and the ATP-dependent hybridization of homologous single-stranded DNAs. It interacts with LexA causing its activation and leading to its autocatalytic cleavage. The chain is Protein RecA from Vibrio cholerae serotype O1 (strain ATCC 39315 / El Tor Inaba N16961).